The sequence spans 1208 residues: Chromosome partition protein Smc (1208 aa).

Residue 32–39 (PNGCGKSN) participates in ATP binding. Coiled-coil stretches lie at residues 170-205 (VTKY…GERI), 239-504 (EARA…ARVQ), and 694-1054 (VIER…QLQD).

The protein belongs to the SMC family. In terms of assembly, homodimer.

It localises to the cytoplasm. Functionally, required for chromosome condensation and partitioning. This Thauera aminoaromatica protein is Chromosome partition protein Smc.